The chain runs to 442 residues: Type 3 secretion system ATPase (442 aa).

173–178 is a binding site for ATP; sequence GVGKST.

Belongs to the ATPase alpha/beta chains family. T3SS ATPase subfamily. As to quaternary structure, the core secretion machinery of the T3SS is composed of approximately 20 different proteins, including cytoplasmic components, a base, an export apparatus and a needle. This subunit is part of the cytosolic complex. Forms homohexamers.

It is found in the cytoplasm. It carries out the reaction ATP + H2O + cellular proteinSide 1 = ADP + phosphate + cellular proteinSide 2.. ATPase component of the type III secretion system (T3SS), also called injectisome, which is used to inject bacterial effector proteins into eukaryotic host cells. Acts as a molecular motor to provide the energy that is required for the export of proteins. Required for type III secretion apparatus (T3SA) formation, proper protein secretion, host cell invasion and virulence. May play a critical role in T3SS substrate recognition, disassembly of the effector/chaperone complex and unfolding of the effector in an ATP-dependent manner prior to secretion. The chain is Type 3 secretion system ATPase from Xanthomonas euvesicatoria.